A 369-amino-acid chain; its full sequence is Glutamate 5-kinase (369 aa).

An ATP-binding site is contributed by K9. The substrate site is built by S49, D136, and N148. ATP is bound by residues 168 to 169 and 210 to 216; these read TD and TGGMLTK. The PUA domain occupies 275 to 355; the sequence is QGEIYVDQGA…KGVVIHRDDW (81 aa).

The protein belongs to the glutamate 5-kinase family.

The protein resides in the cytoplasm. The enzyme catalyses L-glutamate + ATP = L-glutamyl 5-phosphate + ADP. It functions in the pathway amino-acid biosynthesis; L-proline biosynthesis; L-glutamate 5-semialdehyde from L-glutamate: step 1/2. Catalyzes the transfer of a phosphate group to glutamate to form L-glutamate 5-phosphate. The sequence is that of Glutamate 5-kinase from Streptococcus gordonii (strain Challis / ATCC 35105 / BCRC 15272 / CH1 / DL1 / V288).